A 501-amino-acid polypeptide reads, in one-letter code: ATP synthase subunit alpha (501 aa).

169–176 serves as a coordination point for ATP; it reads GDRQTGKT.

This sequence belongs to the ATPase alpha/beta chains family. In terms of assembly, F-type ATPases have 2 components, CF(1) - the catalytic core - and CF(0) - the membrane proton channel. CF(1) has five subunits: alpha(3), beta(3), gamma(1), delta(1), epsilon(1). CF(0) has three main subunits: a(1), b(2) and c(9-12). The alpha and beta chains form an alternating ring which encloses part of the gamma chain. CF(1) is attached to CF(0) by a central stalk formed by the gamma and epsilon chains, while a peripheral stalk is formed by the delta and b chains.

It is found in the cell inner membrane. The enzyme catalyses ATP + H2O + 4 H(+)(in) = ADP + phosphate + 5 H(+)(out). In terms of biological role, produces ATP from ADP in the presence of a proton gradient across the membrane. The alpha chain is a regulatory subunit. This chain is ATP synthase subunit alpha, found in Campylobacter jejuni subsp. jejuni serotype O:6 (strain 81116 / NCTC 11828).